The chain runs to 552 residues: FERRY endosomal RAB5 effector complex subunit 3 (552 aa).

Serine 79 bears the Phosphoserine mark.

Component of the FERRY complex composed of five subunits, TBCK, PPP1R21, FERRY3, CRYZL1 and GATD1 with a ratio of 1:2:1:2:4, respectively.

The protein resides in the cytoplasm. It is found in the early endosome. Functionally, component of the FERRY complex (Five-subunit Endosomal Rab5 and RNA/ribosome intermediary). The FERRY complex directly interacts with mRNAs and RAB5A, and functions as a RAB5A effector involved in the localization and the distribution of specific mRNAs most likely by mediating their endosomal transport. The complex recruits mRNAs and ribosomes to early endosomes through direct mRNA-interaction. Plays a role in mast cell degranulation. This is FERRY endosomal RAB5 effector complex subunit 3 from Rattus norvegicus (Rat).